Consider the following 110-residue polypeptide: Protein YcgL (110 aa).

Positions 14–98 constitute a YcgL domain; it reads MFCVIYRSSK…PPEDLLKQHL (85 aa). A disordered region spans residues 88–110; it reads PPPEDLLKQHLSSVGQNTSHADR. Residues 97–110 show a composition bias toward polar residues; it reads HLSSVGQNTSHADR.

The chain is Protein YcgL from Salmonella schwarzengrund (strain CVM19633).